A 293-amino-acid polypeptide reads, in one-letter code: SAGA-associated factor 29 (293 aa).

Residues 3-88 (LVSADSRIAE…KALDKIAEIK (86 aa)) are a coiled coil. In terms of domain architecture, SGF29 C-terminal spans 152–293 (GDYVARPGDK…VVACKEPKKK (142 aa)). 2 histone H3K4me3 N-terminus binding regions span residues 194–196 (DID) and 240–243 (QTTC). A histone H3K4me3 binding region spans residues 264 to 266 (FED). K288 bears the N6-acetyllysine mark.

This sequence belongs to the SGF29 family. As to quaternary structure, interacts with dimethylated and trimethylated 'Lys-4' of histone H3 (H3K4me2 and H3K4me3), with a preference for the trimethylated form (H3K4me3). Component of some SAGA-type complexes. Component of the ADA2A-containing complex (ATAC), composed of KAT14, KAT2A, TADA2L, TADA3L, ZZ3, MBIP, WDR5, YEATS2, CCDC101 and DR1. Interacts with (methylated) CGAS. Interacts with TADA3L, GCN5L2, SUPT3H and MYC.

The protein resides in the nucleus. Functionally, chromatin reader component of some histone acetyltransferase (HAT) SAGA-type complexes like the TFTC-HAT, ATAC or STAGA complexes. SGF29 specifically recognizes and binds methylated 'Lys-4' of histone H3 (H3K4me), with a preference for trimethylated form (H3K4me3). In the SAGA-type complexes, SGF29 is required to recruit complexes to H3K4me. Involved in the response to endoplasmic reticulum (ER) stress by recruiting the SAGA complex to H3K4me, thereby promoting histone H3 acetylation and cell survival. Also binds non-histone proteins that are methylated on Lys residues: specifically recognizes and binds CGAS monomethylated on 'Lys-506'. In Homo sapiens (Human), this protein is SAGA-associated factor 29.